The chain runs to 324 residues: Beta-ketoacyl-[acyl-carrier-protein] synthase III (324 aa).

Residues Cys114 and His246 contribute to the active site. Residues 247–251 (QANLR) form an ACP-binding region. Residue Asn276 is part of the active site.

The protein belongs to the thiolase-like superfamily. FabH family. In terms of assembly, homodimer.

Its subcellular location is the cytoplasm. It carries out the reaction malonyl-[ACP] + acetyl-CoA + H(+) = 3-oxobutanoyl-[ACP] + CO2 + CoA. The protein operates within lipid metabolism; fatty acid biosynthesis. Its function is as follows. Catalyzes the condensation reaction of fatty acid synthesis by the addition to an acyl acceptor of two carbons from malonyl-ACP. Catalyzes the first condensation reaction which initiates fatty acid synthesis and may therefore play a role in governing the total rate of fatty acid production. Possesses both acetoacetyl-ACP synthase and acetyl transacylase activities. Its substrate specificity determines the biosynthesis of branched-chain and/or straight-chain of fatty acids. The chain is Beta-ketoacyl-[acyl-carrier-protein] synthase III from Campylobacter jejuni subsp. doylei (strain ATCC BAA-1458 / RM4099 / 269.97).